We begin with the raw amino-acid sequence, 264 residues long: Outer kinetochore KNL1 complex subunit sos7 (264 aa).

A coiled-coil region spans residues E90 to T236.

Belongs to the KRE28 family. Component of the KNL1/SPC105 complex composed of at least spc7 and sos7. Part of the outer kinetochore KMN network that includes the KNL1, MIS12 and NDC80 complexes. Interacts (via C-terminus) with spc7 (via C-terminus); the interaction is direct.

The protein resides in the nucleus. It is found in the chromosome. Its subcellular location is the centromere. The protein localises to the kinetochore. Its function is as follows. Acts as a component of the outer kinetochore KNL1 complex that facilitates microtubule-kinetochore interactions and the spindle assembly checkpoint. Kinetochores, consisting of a centromere-associated inner segment and a microtubule-contacting outer segment, play a crucial role in chromosome segregation by mediating the physical connection between centromeric DNA and spindle microtubules. The outer kinetochore is made up of the ten-subunit KMN network, comprising the MIS12, NDC80 and KNL1 complexes, and auxiliary microtubule-associated components; together they connect the outer kinetochore with the inner kinetochore, bind microtubules, and mediate interactions with mitotic checkpoint proteins that delay anaphase until chromosomes are bioriented on the spindle. In Schizosaccharomyces pombe (strain 972 / ATCC 24843) (Fission yeast), this protein is Outer kinetochore KNL1 complex subunit sos7 (sos7).